Reading from the N-terminus, the 143-residue chain is Large ribosomal subunit protein uL11 (143 aa).

The protein belongs to the universal ribosomal protein uL11 family. As to quaternary structure, part of the ribosomal stalk of the 50S ribosomal subunit. Interacts with L10 and the large rRNA to form the base of the stalk. L10 forms an elongated spine to which L12 dimers bind in a sequential fashion forming a multimeric L10(L12)X complex. Post-translationally, one or more lysine residues are methylated.

In terms of biological role, forms part of the ribosomal stalk which helps the ribosome interact with GTP-bound translation factors. The polypeptide is Large ribosomal subunit protein uL11 (Thioalkalivibrio sulfidiphilus (strain HL-EbGR7)).